The sequence spans 375 residues: N-acetylneuraminate epimerase (375 aa).

An N-terminal signal peptide occupies residues 1–22 (MKLTKTALCTALFATFTFSANA). 7 Kelch repeats span residues 43–87 (TVYV…AAVD), 89–140 (KLYV…ASHG), 142–176 (KVYILGGSNLSIFNGFFQDNVAAGEDQAKKDEIAA), 177–222 (AYFD…TIQG), 225–273 (LVVV…LAGA), 295–344 (KQYK…SYNN), and 346–375 (VLLIGGETDGGKALTSVKAISYDGKKLTIE). The active-site Proton acceptor is the E231.

It belongs to the NanM family. Homodimer.

The protein localises to the periplasm. It carries out the reaction N-acetyl-alpha-neuraminate = N-acetyl-beta-neuraminate. In terms of biological role, converts alpha-N-acetylneuranimic acid (Neu5Ac) to the beta-anomer, accelerating the equilibrium between the alpha- and beta-anomers. Probably facilitates sialidase-negative bacteria to compete successfully for limited amounts of extracellular Neu5Ac, which is likely taken up in the beta-anomer. In addition, the rapid removal of sialic acid from solution might be advantageous to the bacterium to damp down host responses. This is N-acetylneuraminate epimerase from Haemophilus influenzae (strain PittEE).